The following is a 354-amino-acid chain: Serum paraoxonase/lactonase 3 (354 aa).

N-linked (GlcNAc...) asparagine glycosylation occurs at Asn-29. Cys-42 and Cys-352 are disulfide-bonded. Ca(2+) is bound by residues Glu-53 and Asp-54. The active-site Proton acceptor is His-114. Ile-116 is a Ca(2+) binding site. Ser-165 is subject to Phosphoserine. 5 residues coordinate Ca(2+): Asn-167, Asp-168, Asn-223, Asp-268, and Asn-269. Residues Asn-269 and Asn-323 are each glycosylated (N-linked (GlcNAc...) asparagine).

The protein belongs to the paraoxonase family. In terms of assembly, homodimer. Ca(2+) is required as a cofactor. The signal sequence is not cleaved.

The protein resides in the secreted. The protein localises to the extracellular space. It carries out the reaction a phenyl acetate + H2O = a phenol + acetate + H(+). The catalysed reaction is An aryl dialkyl phosphate + H2O = dialkyl phosphate + an aryl alcohol.. It catalyses the reaction an N-acyl-L-homoserine lactone + H2O = an N-acyl-L-homoserine + H(+). In terms of biological role, has low activity towards the organophosphate paraxon and aromatic carboxylic acid esters. Rapidly hydrolyzes lactones such as statin prodrugs (e.g. lovastatin). Hydrolyzes aromatic lactones and 5- or 6-member ring lactones with aliphatic substituents but not simple lactones or those with polar substituents. The sequence is that of Serum paraoxonase/lactonase 3 (PON3) from Homo sapiens (Human).